The primary structure comprises 904 residues: Serine/arginine repetitive matrix protein 1 (904 aa).

Methionine 1 bears the N-acetylmethionine mark. The segment at 1-151 (MDAGFFRGTS…ASMKKQDEDK (151 aa)) is necessary for DNA and RNA-binding. A necessary for mRNA 3'-end cleavage and cytoplasmic accumulation region spans residues 1-156 (MDAGFFRGTS…QDEDKDKRDK (156 aa)). Arginine 7 bears the Citrulline mark. One can recognise a PWI domain in the interval 27-126 (QLKFAECLEK…AGIPSAFLEL (100 aa)). Lysine 127 participates in a covalent cross-link: Glycyl lysine isopeptide (Lys-Gly) (interchain with G-Cter in SUMO2). The span at 139-170 (EKLASMKKQDEDKDKRDKEEKESSREKRERSR) shows a compositional bias: basic and acidic residues. The tract at residues 139–904 (EKLASMKKQD…MRKAQVSPQS (766 aa)) is disordered. Lysine 140 carries the N6-acetyllysine modification. Over residues 171-207 (SPRRRKSRSPSPRRRSSPVRRERKRSHSRSPRHRTKS) the composition is skewed to basic residues. Residues 214–234 (PEKKEKTPELPEPSVKVKEPS) are compositionally biased toward basic and acidic residues. Position 220 is a phosphothreonine (threonine 220). A Phosphoserine modification is found at serine 227. A Glycyl lysine isopeptide (Lys-Gly) (interchain with G-Cter in SUMO1); alternate cross-link involves residue lysine 231. A Glycyl lysine isopeptide (Lys-Gly) (interchain with G-Cter in SUMO2); alternate cross-link involves residue lysine 231. Phosphoserine occurs at positions 234 and 240. Threonine 241 bears the Phosphothreonine mark. Positions 246–275 (KVPKPEPIPEPKEPSPEKNSKKEKEKEKTR) are enriched in basic and acidic residues. A Glycyl lysine isopeptide (Lys-Gly) (interchain with G-Cter in SUMO2) cross-link involves residue lysine 249. The residue at position 260 (serine 260) is a Phosphoserine. Basic residues-rich tracts occupy residues 276–329 (PRSR…RTPP) and 336–351 (PRHR…RRRS). Positions 300-688 (RRHRSRSRSY…NKRHSPSPRP (389 aa)) are necessary for speckles and matrix localization. Positions 352–368 (SASLSGSSSSSSSSRSR) are enriched in low complexity. Serine 389, serine 391, serine 393, and serine 402 each carry phosphoserine. Residue threonine 406 is modified to Phosphothreonine. Serine 414 carries the phosphoserine modification. Threonine 416 carries the phosphothreonine modification. Phosphoserine occurs at positions 420, 429, 431, and 436. Positions 428–438 (VSVSPGRTSGK) are enriched in polar residues. Lysine 447 participates in a covalent cross-link: Glycyl lysine isopeptide (Lys-Gly) (interchain with G-Cter in SUMO2). Phosphoserine is present on residues serine 450 and serine 452. A Glycyl lysine isopeptide (Lys-Gly) (interchain with G-Cter in SUMO2) cross-link involves residue lysine 459. 2 positions are modified to phosphoserine: serine 463 and serine 465. A Glycyl lysine isopeptide (Lys-Gly) (interchain with G-Cter in SUMO2) cross-link involves residue lysine 472. Serine 478 is modified (phosphoserine). Positions 478–501 (SVQQRRQYRRQNQQSSSDSGSSSS) are enriched in low complexity. Over residues 503 to 518 (EDERPKRSHVKNGEVG) the composition is skewed to basic and acidic residues. A phosphoserine mark is found at serine 524, serine 526, serine 528, serine 530, serine 532, serine 549, and serine 551. Residues 533–560 (PRKRQKETSPRGRRRRSPSPPPTRRRRS) are compositionally biased toward basic residues. Threonine 555 is subject to Phosphothreonine. Phosphoserine is present on residues serine 560 and serine 562. Basic residues predominate over residues 567–592 (PRRRRTPTPPPRRRTPSPPPRRRSPS). Threonine 572, threonine 574, and threonine 581 each carry phosphothreonine. Residue serine 583 is modified to Phosphoserine. The span at 593–605 (PRRYSPPIQRRYS) shows a compositional bias: low complexity. A Phosphotyrosine modification is found at tyrosine 596. Phosphoserine occurs at positions 597, 605, and 607. Threonine 614 bears the Phosphothreonine mark. A phosphoserine mark is found at serine 616, serine 626, serine 628, serine 636, and serine 638. A compositionally biased stretch (basic residues) spans 621 to 636 (PKRRASPSPPPKRRVS). Over residues 649–663 (TKRRSPSLSSKHRKG) the composition is skewed to basic residues. Phosphoserine occurs at positions 694, 695, 696, 705, 707, 713, and 715. 2 stretches are compositionally biased toward low complexity: residues 701–719 (RRGA…PSTR) and 736–759 (AASP…SPEP). Residue threonine 718 is modified to Phosphothreonine. Phosphoserine is present on residues serine 738, serine 740, serine 748, serine 752, serine 754, serine 756, serine 769, serine 773, serine 775, and serine 777. The segment covering 771-786 (VQSQSPSTNWSPAVPV) has biased composition (low complexity). Threonine 778 carries the post-translational modification Phosphothreonine. Residues serine 781 and serine 791 each carry the phosphoserine modification. A Phosphothreonine modification is found at threonine 793. 3 positions are modified to phosphoserine: serine 795, serine 797, and serine 802. Over residues 809 to 834 (KKKKKKKDKKHKKDKKHKKHKKHKKE) the composition is skewed to basic residues. The segment covering 837 to 866 (VAAAAAAAVTPAAIAAATTTLAQEEPVAAP) has biased composition (low complexity). Residue lysine 869 forms a Glycyl lysine isopeptide (Lys-Gly) (interchain with G-Cter in SUMO2) linkage. The residue at position 872 (threonine 872) is a Phosphothreonine. Position 874 is a phosphoserine (serine 874). Over residues 882-892 (DLEKHLREKAL) the composition is skewed to basic and acidic residues. Serine 901 is subject to Phosphoserine.

This sequence belongs to the splicing factor SR family. Identified in the spliceosome C complex. Found in a pre-mRNA splicing complex with SFRS4, SFRS5, SNRP70, SNRPA1, SRRM1 and SRRM2. Found in a pre-mRNA exonic splicing enhancer (ESE) complex with SNRP70, SNRPA1, SRRM1 and TRA2B/SFRS10. Component of the minor spliceosome, which splices U12-type introns. Found in a mRNA splicing-dependent exon junction complex (EJC) with DEK, PRPF8, NCBP1, RBM8A, RNPS1, SRRM1 and ALYREF/THOC4. Interacts with DDX39B, CPSF1, RBM8A, RNPS1, and ALYREF/THOC4. Seems to be a compound of RNA export complexes that are released from speckles in a ATP-dependent manner. Post-translationally, phosphorylated on multiple serine and threonine residues by DYRK3 during the G2-to-M transition, after the nuclear-envelope breakdown. Phosphorylation by DYRK3 promotes disassembly of nuclear speckles. Citrullinated by PADI4.

The protein resides in the nucleus matrix. The protein localises to the nucleus speckle. In terms of biological role, part of pre- and post-splicing multiprotein mRNP complexes. As a component of the minor spliceosome, involved in the splicing of U12-type introns in pre-mRNAs. Involved in numerous pre-mRNA processing events. Promotes constitutive and exonic splicing enhancer (ESE)-dependent splicing activation by bridging together sequence-specific (SR family proteins, SFRS4, SFRS5 and TRA2B/SFRS10) and basal snRNP (SNRP70 and SNRPA1) factors of the spliceosome. Stimulates mRNA 3'-end cleavage independently of the formation of an exon junction complex. Binds both pre-mRNA and spliced mRNA 20-25 nt upstream of exon-exon junctions. Binds RNA and DNA with low sequence specificity and has similar preference for either double- or single-stranded nucleic acid substrates. The polypeptide is Serine/arginine repetitive matrix protein 1 (SRRM1) (Homo sapiens (Human)).